Here is a 69-residue protein sequence, read N- to C-terminus: FXYD domain-containing ion transport regulator 11 (69 aa).

An N-terminal signal peptide occupies residues 1–22; sequence MSQLTELVLLTVFLALFSRAEA. The Extracellular portion of the chain corresponds to 23 to 33; sequence NPFVYNYEALR. The helical transmembrane segment at 34–54 threads the bilayer; sequence IGGLVFTCVLVAGAVTALCWG. Over 55-69 the chain is Cytoplasmic; that stretch reads QCKPKRKHDDDASKI.

This sequence belongs to the FXYD family. As to expression, detected in adult gill and in larval skin at 2 days post-fertilization (at protein level). In adult gill, strong expression is found in the basal regions of the secondary lamellae.

It is found in the cell membrane. In terms of biological role, may modulate the activity of a sodium/potassium-transporting ATPase. The protein is FXYD domain-containing ion transport regulator 11 of Danio rerio (Zebrafish).